The primary structure comprises 373 residues: Queuine tRNA-ribosyltransferase (373 aa).

The active-site Proton acceptor is D90. Substrate is bound by residues 90 to 94 (DSGGF), D144, Q193, and G220. The interval 251-257 (GVGTPED) is RNA binding. D270 functions as the Nucleophile in the catalytic mechanism. Residues 275–279 (TRNAR) are RNA binding; important for wobble base 34 recognition. Positions 308, 310, 313, and 339 each coordinate Zn(2+).

It belongs to the queuine tRNA-ribosyltransferase family. In terms of assembly, homodimer. Within each dimer, one monomer is responsible for RNA recognition and catalysis, while the other monomer binds to the replacement base PreQ1. Zn(2+) is required as a cofactor.

It carries out the reaction 7-aminomethyl-7-carbaguanine + guanosine(34) in tRNA = 7-aminomethyl-7-carbaguanosine(34) in tRNA + guanine. It participates in tRNA modification; tRNA-queuosine biosynthesis. Functionally, catalyzes the base-exchange of a guanine (G) residue with the queuine precursor 7-aminomethyl-7-deazaguanine (PreQ1) at position 34 (anticodon wobble position) in tRNAs with GU(N) anticodons (tRNA-Asp, -Asn, -His and -Tyr). Catalysis occurs through a double-displacement mechanism. The nucleophile active site attacks the C1' of nucleotide 34 to detach the guanine base from the RNA, forming a covalent enzyme-RNA intermediate. The proton acceptor active site deprotonates the incoming PreQ1, allowing a nucleophilic attack on the C1' of the ribose to form the product. After dissociation, two additional enzymatic reactions on the tRNA convert PreQ1 to queuine (Q), resulting in the hypermodified nucleoside queuosine (7-(((4,5-cis-dihydroxy-2-cyclopenten-1-yl)amino)methyl)-7-deazaguanosine). In Campylobacter jejuni subsp. jejuni serotype O:23/36 (strain 81-176), this protein is Queuine tRNA-ribosyltransferase.